The chain runs to 419 residues: Endochitinase 2 (419 aa).

The signal sequence occupies residues 1 to 18 (MHHLRALVGVGLAGLAAG). Positions 35–343 (AQNVVYWGQN…QQAKSILVNG (309 aa)) constitute a GH18 domain. A glycan (N-linked (GlcNAc...) asparagine) is linked at N153. The Proton donor role is filled by E173. N-linked (GlcNAc...) asparagine glycans are attached at residues N237 and N256. Residues 350 to 381 (GPPSSTPATAPAPTATTMPSSTSVSSPAASPT) are compositionally biased toward low complexity. Residues 350–386 (GPPSSTPATAPAPTATTMPSSTSVSSPAASPTGGTVP) form a disordered region. The CBM1 domain occupies 383–419 (GTVPQWGQCGGEGYSGPTQCVAPYQCVKQGDWWSSCR).

It belongs to the glycosyl hydrolase 18 family. Chitinase class III subfamily.

The protein localises to the secreted. It carries out the reaction Random endo-hydrolysis of N-acetyl-beta-D-glucosaminide (1-&gt;4)-beta-linkages in chitin and chitodextrins.. Its function is as follows. Secreted chitinase involved in the degradation of chitin, a component of the cell walls of fungi and exoskeletal elements of some animals (including worms and arthropods). Participates in the infection process and directly acts in the penetration process of the host cuticle. This chain is Endochitinase 2 (chi2), found in Metarhizium robertsii (strain ARSEF 23 / ATCC MYA-3075) (Metarhizium anisopliae (strain ARSEF 23)).